The following is an 864-amino-acid chain: Dynamin-1 (864 aa).

The Dynamin-type G domain maps to 28-294; that stretch reads DLDLPQIAVV…LTNHIRDTLP (267 aa). Positions 38–45 are G1 motif; the sequence is GGQSAGKS. Positions 41, 43, 44, 45, 46, 59, and 60 each coordinate GDP. The interval 64-66 is G2 motif; the sequence is VTR. The residue at position 80 (Tyr80) is a Phosphotyrosine. Tyr125 is subject to 3'-nitrotyrosine; alternate. Phosphotyrosine; alternate is present on Tyr125. The interval 136–139 is G3 motif; the sequence is DLPG. The interval 205–208 is G4 motif; sequence TKLD. Lys206, Asp208, Asp211, Asn236, Arg237, and Gln239 together coordinate GDP. Residues 235 to 238 form a G5 motif region; that stretch reads VNRS. Ser306 and Ser347 each carry phosphoserine. Tyr354 bears the Phosphotyrosine mark. Position 512 is a phosphoserine (Ser512). A PH domain is found at 519-625; sequence LVIRKGWLTI…WKASFLRAGV (107 aa). The region spanning 659-750 is the GED domain; sequence VETIRNLVDS…IIGDINTTTV (92 aa). Residues 767 to 864 are disordered; the sequence is SVPAGRRSPT…PESPRPPFDL (98 aa). At Ser774 the chain carries Phosphoserine; by GSK3-beta. A Phosphoserine modification is found at Ser778. Arg796 is modified (omega-N-methylarginine). Ser822 carries the phosphoserine modification. The span at 825–843 shows a compositional bias: pro residues; sequence PFGPPPQVPSRPNRAPPGV. Residues Ser851 and Ser857 each carry the phosphoserine modification.

It belongs to the TRAFAC class dynamin-like GTPase superfamily. Dynamin/Fzo/YdjA family. In terms of assembly, homodimer; homodimerization is mediated by the dynamin-type G domain which promotes assembly-stimulated GTPase activity. Homo-tetramer formed from two dimers in the absence of lipid. Oligomerizes into a helical polymer that self-assembles around the vesicle membrane, when associated to the menbrane through lipid binding. Interacts (via C-terminal proline-rich domain (PRD)) with SNX9 (via SH3 domain); this interaction allows regulation of DNM1 self-assembly during late stages of endocytic vesicle formation and supports DNM1's early functions in accelerating clathrin-coated pits (CCPs) maturation in non neuronals cell. Interacts (via C-terminal proline-rich domain (PRD)) with MYO1E (via SH3 domain); this interaction regulates receptor-mediated endocytosis. Interacts with SNX33 (via SH3 domain); this interaction decreases DNM1-dependent endocytosis. Interacts with DIAPH1. Interacts with GRB2 (via SH3 domain); this interaction mediates disassembly of DNM1 polymers, therefore modulates self-assembly. Forms a complex with BIN1 (via SH3 domain) and SH3GL2 (via SH3 domain). Forms a complex with SH3GL2 (via SH3 domain) and AMPH (via SH3 domain). Forms a complex with SH3GL2 (via SH3 domain) and SYNJ1. Interacts with AMPH. Interacts (via C-terminal proline-rich domain (PRD)) with SYT1; this interaction facilitates vesicle fission during clathrin-mediated endocytosis (CME). Interacts (via C-terminal proline-rich domain (PRD)) with PLCG1 (via SH3 domain); this interaction stimulates the release of GDP from DNM1 and enhances DNM1-dependent endocytosis. Interacts with SNPH; this interaction inhibits the binding of DNM1 to AMPH and DNM1-receptor-mediated endocytosis. Interacts with CAV1. Interacts with SH3GLB1 (via SH3 domain). Interacts with PACSIN1 (via SH3 domain), PACSIN2 (via SH3 domain) and PACSIN3 (via SH3 domain). Interacts with UNC119; this interaction decreases DNM1's GTPase activity and affects DNM1's interaction with AMPH. Interacts (GTP-bound form) with DNAJC6; this interaction allows clathrin-coated vesicle (CCV) formation at the plasma membrane. Post-translationally, phosphorylation at Ser-774 by GSK3B/GSK3-beta leads to inactivation of receptor-mediated endocytosis in non-neuronal cells. Dephosphorylation at Ser-774, through the EGFR downstream signaling, leads to activation and regulates early stages of clathrin-mediated endocytosis (CME). Phosphorylated by CDK5 leading to synaptic vesicle endocytosis (SVE) activation.

It localises to the cell membrane. It is found in the membrane. The protein resides in the clathrin-coated pit. Its subcellular location is the cytoplasmic vesicle. The protein localises to the presynapse. It localises to the secretory vesicle. It is found in the chromaffin granule. The catalysed reaction is GTP + H2O = GDP + phosphate + H(+). Its activity is regulated as follows. GTPase activity is activated by 1-phosphatidyl-1D-myo-inositol 4,5-bisphosphate. GTPase activity is inhibited by the heterodimer G protein formed by GNB1 and GNG2 with an IC(50)=400 nM when DNM1 concentration is 5 nM. Functionally, catalyzes the hydrolysis of GTP and utilizes this energy to mediate vesicle scission and participates in many forms of endocytosis, such as clathrin-mediated endocytosis or synaptic vesicle endocytosis as well as rapid endocytosis (RE). Associates to the membrane, through lipid binding, and self-assembles into rings and stacks of interconnected rings through oligomerization to form a helical polymer around the vesicle membrane leading to constriction of invaginated coated pits around their necks. Self-assembly of the helical polymer induces membrane tubules narrowing until the polymer reaches a length sufficient to trigger GTP hydrolysis. Depending on the curvature imposed on the tubules, membrane detachment from the helical polymer upon GTP hydrolysis can cause spontaneous hemifission followed by complete fission. May play a role in regulating early stages of clathrin-mediated endocytosis in non-neuronal cells through its activation by dephosphorylation via the signaling downstream of EGFR. Controls vesicle size at a step before fission, during formation of membrane pits, at hippocampal synapses. Controls plastic adaptation of the synaptic vesicle recycling machinery to high levels of activity. Mediates rapid endocytosis (RE), a Ca(2+)-dependent and clathrin- and K(+)-independent process in chromaffin cells. Microtubule-associated force-producing protein involved in producing microtubule bundles and able to bind and hydrolyze GTP. Through its interaction with DNAJC6, acts during the early steps of clathrin-coated vesicle (CCV) formation. The chain is Dynamin-1 from Homo sapiens (Human).